We begin with the raw amino-acid sequence, 378 residues long: REST corepressor 3 (378 aa).

In terms of domain architecture, ELM2 spans 1–83; that stretch reads MRVGAEYQAR…KSLADLPNFT (83 aa). An SANT domain is found at 84–135; sequence PFPDEWTVEDKVLFEQAFSFHGKSFHRIQQMLPDKTIASLVKYYYSWKKTRS. A disordered region spans residues 147-219; the sequence is LANRNNQGDS…SQRSKCRPPK (73 aa). The span at 162 to 184 shows a compositional bias: basic and acidic residues; that stretch reads EPHPMDGNDSDYDPKKEAKKEGN. A compositionally biased stretch (basic residues) spans 205–217; sequence QHRHHSQRSKCRP. A coiled-coil region spans residues 238–273; that stretch reads ANTILRRLDMELISLKRQVQNAKQVNSALKQKMEGG. Residues 337-356 are disordered; the sequence is TASSTSCCSCSPPSASAAPT.

This sequence belongs to the CoREST family.

It is found in the nucleus. May act as a component of a corepressor complex that represses transcription. The polypeptide is REST corepressor 3 (RCOR3) (Gallus gallus (Chicken)).